The chain runs to 906 residues: NADH-quinone oxidoreductase subunit G (906 aa).

One can recognise a 2Fe-2S ferredoxin-type domain in the interval 2-83; sequence AKIYVDSKIY…GAIISIKSTE (82 aa). [2Fe-2S] cluster is bound by residues Cys-34, Cys-45, Cys-48, and Cys-67. In terms of domain architecture, 4Fe-4S His(Cys)3-ligated-type spans 83-122; it reads ESEVFRSAIVELLLTNHPHDCPVCEEGGHCHLQDMTVMVK. [4Fe-4S] cluster-binding residues include His-99, Cys-103, Cys-106, Cys-112, Cys-151, Cys-154, Cys-157, Cys-201, Cys-228, Cys-231, Cys-235, and Cys-263. One can recognise a 4Fe-4S Mo/W bis-MGD-type domain in the interval 221–277; sequence MQYAPGICHNCSVGCNISIGERYGEIRRIENRYHENINHYLICDLGRFGYSHTNLNT.

It belongs to the complex I 75 kDa subunit family. As to quaternary structure, composed of 13 different subunits. Subunits NuoCD, E, F, and G constitute the peripheral sector of the complex. It depends on [2Fe-2S] cluster as a cofactor. The cofactor is [4Fe-4S] cluster.

The catalysed reaction is a quinone + NADH + 5 H(+)(in) = a quinol + NAD(+) + 4 H(+)(out). Its function is as follows. NDH-1 shuttles electrons from NADH, via FMN and iron-sulfur (Fe-S) centers, to quinones in the respiratory chain. Couples the redox reaction to proton translocation (for every two electrons transferred, four hydrogen ions are translocated across the cytoplasmic membrane), and thus conserves the redox energy in a proton gradient. The sequence is that of NADH-quinone oxidoreductase subunit G (nuoG) from Buchnera aphidicola subsp. Acyrthosiphon pisum (strain APS) (Acyrthosiphon pisum symbiotic bacterium).